Reading from the N-terminus, the 243-residue chain is Small ribosomal subunit protein uS3 (243 aa).

The region spanning 39–107 (LRKLISKELQ…KIKLNIKEIH (69 aa)) is the KH type-2 domain. The disordered stretch occupies residues 212–243 (VAKSPAEPATTAPTPAPERRERQPRRNSNASA).

Belongs to the universal ribosomal protein uS3 family. As to quaternary structure, part of the 30S ribosomal subunit. Forms a tight complex with proteins S10 and S14.

Functionally, binds the lower part of the 30S subunit head. Binds mRNA in the 70S ribosome, positioning it for translation. The protein is Small ribosomal subunit protein uS3 of Chloroflexus aurantiacus (strain ATCC 29364 / DSM 637 / Y-400-fl).